The sequence spans 593 residues: MAATVATAAAVAPAPAPGTDSASSVHWFRKGLRLHDNPALLAAVRGARCVRCVYILDPWFAASSSVGINRWRFLLQSLEDLDTSLRKLNSRLFVVRGQPADVFPRLFKEWGVTRLTFEYDSEPFGKERDAAIMKMAKEAGVEVVTENSHTLYDLDRIIELNGQKPPLTYKRFQAIISRMELPKKPVGLVTSQQMESCRAEIQENHDETYGVPSLEELGFPTEGLGPAVWQGGETEALARLDKHLERKAWVANYERPRMNANSLLASPTGLSPYLRFGCLSCRLFYYRLWDLYKKVKRNSTPPLSLFGQLLWREFFYTAATNNPRFDRMEGNPICIQIPWDRNPEALAKWAEGKTGFPWIDAIMTQLRQEGWIHHLARHAVACFLTRGDLWVSWESGVRVFDELLLDADFSVNAGSWMWLSCSAFFQQFFHCYCPVGFGRRTDPSGDYIRRYLPKLKAFPSRYIYEPWNAPESIQKAAKCIIGVDYPRPIVNHAETSRLNIERMKQIYQQLSRYRGLCLLASVPSCVEDLSHPVAEPSSSQAGSMSSAGPRPLPSGPASPKRKLEAAEEPPGEELSKRARVAELPTPELPSKDA.

Positions 22-151 (ASSVHWFRKG…EVVTENSHTL (130 aa)) constitute a Photolyase/cryptochrome alpha/beta domain. Residue K30 forms a Glycyl lysine isopeptide (Lys-Gly) (interchain with G-Cter in ubiquitin) linkage. S90 is subject to Phosphoserine. Glycyl lysine isopeptide (Lys-Gly) (interchain with G-Cter in ubiquitin) cross-links involve residues K126 and K242. Position 266 is a phosphoserine; by MAPK (S266). FAD is bound at residue S271. S299 carries the post-translational modification Phosphoserine. An FAD-binding site is contributed by Q308. Residue K348 forms a Glycyl lysine isopeptide (Lys-Gly) (interchain with G-Cter in ubiquitin) linkage. Residues H374 and 406–408 (DAD) each bind FAD. Residues 390–489 (WVSWESGVRV…IIGVDYPRPI (100 aa)) are required for inhibition of CLOCK-BMAL1-mediated transcription. Residues K475 and K504 each participate in a glycyl lysine isopeptide (Lys-Gly) (interchain with G-Cter in ubiquitin) cross-link. Residues 532–593 (PVAEPSSSQA…PTPELPSKDA (62 aa)) form a disordered region. The segment covering 537-548 (SSSQAGSMSSAG) has biased composition (low complexity). S554 carries the phosphoserine; by GSK3-beta modification. S558 is subject to Phosphoserine; by DYRK1A and MAPK.

This sequence belongs to the DNA photolyase class-1 family. As to quaternary structure, component of the circadian core oscillator, which includes the CRY proteins, CLOCK or NPAS2, BMAL1 or BMAL2, CSNK1D and/or CSNK1E, TIMELESS, and the PER proteins. Interacts with TIMELESS. Interacts directly with PER1, PER2 and PER3; interaction with PER2 inhibits its ubiquitination and vice versa. Interacts with CLOCK-BMAL1. Interacts with CLOCK. Interacts with BMAL1. Interacts with NFIL3. Interacts with FBXL3. Interacts with FBXL21. FBXL3, PER2 and the cofactor FAD compete for overlapping binding sites. FBXL3 cannot bind CRY2 that interacts already with PER2 or that contains bound FAD. Interacts with PPP5C (via TPR repeats); the interaction down-regulates the PPP5C phosphatase activity on CSNK1E. Interacts with nuclear receptors AR and NR3C1/GR; the interaction is ligand dependent. Interacts with PRKDC and CIART. Interacts with ISCA1 (in vitro). Interacts with DDB1, USP7 and TARDBP. Interacts with HNF4A. Interacts with PPARA. Interacts with PPARD (via domain NR LBD) and NR1I2 (via domain NR LBD) in a ligand-dependent manner. Interacts with PPARG, NR1I3 and VDR in a ligand-dependent manner. FAD is required as a cofactor. It depends on (6R)-5,10-methylene-5,6,7,8-tetrahydrofolate as a cofactor. In terms of processing, phosphorylation on Ser-266 by MAPK is important for the inhibition of CLOCK-BMAL1-mediated transcriptional activity. Phosphorylation by CSKNE requires interaction with PER1 or PER2. Phosphorylated in a circadian manner at Ser-554 and Ser-558 in the suprachiasmatic nucleus (SCN) and liver. Phosphorylation at Ser-558 by DYRK1A promotes subsequent phosphorylation at Ser-554 by GSK3-beta: the two-step phosphorylation at the neighboring Ser residues leads to its proteasomal degradation. Post-translationally, ubiquitinated by the SCF(FBXL3) and SCF(FBXL21) complexes, regulating the balance between degradation and stabilization. The SCF(FBXL3) complex is mainly nuclear and mediates ubiquitination and subsequent degradation of CRY2. In contrast, cytoplasmic SCF(FBXL21) complex-mediated ubiquitination leads to stabilize CRY2 and counteract the activity of the SCF(FBXL3) complex. The SCF(FBXL3) and SCF(FBXL21) complexes probably mediate ubiquitination at different Lys residues. The SCF(FBXL3) complex recognizes and binds CRY2 phosphorylated at Ser-554 and Ser-558. Ubiquitination may be inhibited by PER2. Deubiquitinated by USP7. Expressed in all tissues examined including fetal brain, fibroblasts, heart, brain, placenta, lung, liver, skeletal muscle, kidney, pancreas, spleen, thymus, prostate, testis, ovary, small intestine, colon and leukocytes. Highest levels in heart and skeletal muscle.

It localises to the cytoplasm. The protein resides in the nucleus. KL001 (N-[3-(9H-carbazol-9-yl)-2-hydroxypropyl]-N-(2-furanylmethyl)-methanesulfonamide) binds to CRY1 and stabilizes it by inhibiting FBXL3- and ubiquitin-dependent degradation of CRY1 resulting in lengthening of the circadian periods. In terms of biological role, transcriptional repressor which forms a core component of the circadian clock. The circadian clock, an internal time-keeping system, regulates various physiological processes through the generation of approximately 24 hour circadian rhythms in gene expression, which are translated into rhythms in metabolism and behavior. It is derived from the Latin roots 'circa' (about) and 'diem' (day) and acts as an important regulator of a wide array of physiological functions including metabolism, sleep, body temperature, blood pressure, endocrine, immune, cardiovascular, and renal function. Consists of two major components: the central clock, residing in the suprachiasmatic nucleus (SCN) of the brain, and the peripheral clocks that are present in nearly every tissue and organ system. Both the central and peripheral clocks can be reset by environmental cues, also known as Zeitgebers (German for 'timegivers'). The predominant Zeitgeber for the central clock is light, which is sensed by retina and signals directly to the SCN. The central clock entrains the peripheral clocks through neuronal and hormonal signals, body temperature and feeding-related cues, aligning all clocks with the external light/dark cycle. Circadian rhythms allow an organism to achieve temporal homeostasis with its environment at the molecular level by regulating gene expression to create a peak of protein expression once every 24 hours to control when a particular physiological process is most active with respect to the solar day. Transcription and translation of core clock components (CLOCK, NPAS2, BMAL1, BMAL2, PER1, PER2, PER3, CRY1 and CRY2) plays a critical role in rhythm generation, whereas delays imposed by post-translational modifications (PTMs) are important for determining the period (tau) of the rhythms (tau refers to the period of a rhythm and is the length, in time, of one complete cycle). A diurnal rhythm is synchronized with the day/night cycle, while the ultradian and infradian rhythms have a period shorter and longer than 24 hours, respectively. Disruptions in the circadian rhythms contribute to the pathology of cardiovascular diseases, cancer, metabolic syndromes and aging. A transcription/translation feedback loop (TTFL) forms the core of the molecular circadian clock mechanism. Transcription factors, CLOCK or NPAS2 and BMAL1 or BMAL2, form the positive limb of the feedback loop, act in the form of a heterodimer and activate the transcription of core clock genes and clock-controlled genes (involved in key metabolic processes), harboring E-box elements (5'-CACGTG-3') within their promoters. The core clock genes: PER1/2/3 and CRY1/2 which are transcriptional repressors form the negative limb of the feedback loop and interact with the CLOCK|NPAS2-BMAL1|BMAL2 heterodimer inhibiting its activity and thereby negatively regulating their own expression. This heterodimer also activates nuclear receptors NR1D1/2 and RORA/B/G, which form a second feedback loop and which activate and repress BMAL1 transcription, respectively. CRY1 and CRY2 have redundant functions but also differential and selective contributions at least in defining the pace of the SCN circadian clock and its circadian transcriptional outputs. Less potent transcriptional repressor in cerebellum and liver than CRY1, though less effective in lengthening the period of the SCN oscillator. Seems to play a critical role in tuning SCN circadian period by opposing the action of CRY1. With CRY1, dispensable for circadian rhythm generation but necessary for the development of intercellular networks for rhythm synchrony. May mediate circadian regulation of cAMP signaling and gluconeogenesis by blocking glucagon-mediated increases in intracellular cAMP concentrations and in CREB1 phosphorylation. Besides its role in the maintenance of the circadian clock, is also involved in the regulation of other processes. Plays a key role in glucose and lipid metabolism modulation, in part, through the transcriptional regulation of genes involved in these pathways, such as LEP or ACSL4. Represses glucocorticoid receptor NR3C1/GR-induced transcriptional activity by binding to glucocorticoid response elements (GREs). Represses the CLOCK-BMAL1 induced transcription of BHLHE40/DEC1. Represses the CLOCK-BMAL1 induced transcription of NAMPT. Represses PPARD and its target genes in the skeletal muscle and limits exercise capacity. Represses the transcriptional activity of NR1I2. The sequence is that of Cryptochrome-2 (CRY2) from Homo sapiens (Human).